Reading from the N-terminus, the 182-residue chain is MDAIVYFAKGFMYLFEVGGNTFVSWVTGIIPKVLLLLVFMNSIIAFIGQDKVDRFAKFASRNVILAYGVLPFLSAFMLGNPMALSMGKFLPERMKPSYYASASYHCHTNSGIFPHINVGEIFIYLGIANGITTLGLDPTALGLRYLLVGLVMNFFAGWVTDFTTKIVMRQQGIELSNQLKAN.

Residues 1–182 (MDAIVYFAKG…IELSNQLKAN (182 aa)) enclose the PTS EIIC type-5 domain. Helical transmembrane passes span 28–48 (GIIPKVLLLLVFMNSIIAFIG), 63–83 (VILAYGVLPFLSAFMLGNPMA), and 139–159 (TALGLRYLLVGLVMNFFAGWV).

The protein localises to the cell membrane. Its function is as follows. The phosphoenolpyruvate-dependent sugar phosphotransferase system (PTS), a major carbohydrate active transport system, catalyzes the phosphorylation of incoming sugar substrates concomitant with their translocation across the cell membrane. The enzyme II complex composed of SrlA, SrlB and SrlE is involved in glucitol/sorbitol transport. The chain is PTS system glucitol/sorbitol-specific EIIC component (srlA) from Clostridium beijerinckii (strain ATCC 51743 / NCIMB 8052) (Clostridium acetobutylicum).